We begin with the raw amino-acid sequence, 84 residues long: Small ribosomal subunit protein uS17 (84 aa).

The protein belongs to the universal ribosomal protein uS17 family. Part of the 30S ribosomal subunit.

In terms of biological role, one of the primary rRNA binding proteins, it binds specifically to the 5'-end of 16S ribosomal RNA. This Sodalis glossinidius (strain morsitans) protein is Small ribosomal subunit protein uS17.